A 1098-amino-acid polypeptide reads, in one-letter code: Protein diaphanous homolog 2 (1098 aa).

Met-1 carries the post-translational modification N-acetylmethionine. Residues 1–62 (MEELGAAASG…SFRKSATKRE (62 aa)) form a disordered region. Positions 36–52 (ANEEETRNKPKLRDRIT) are enriched in basic and acidic residues. The 374-residue stretch at 90-463 (SLILSEKEVL…QIVLHCSGMD (374 aa)) folds into the GBD/FH3 domain. 2 coiled-coil regions span residues 375–416 (QLRV…NMLK) and 490–539 (EENE…GQGV). Disordered regions lie at residues 537–565 (QGVP…PPPP), 578–611 (PPPP…GVFP), 679–699 (MKGQ…PKKK), 1007–1047 (HKRK…NKEG), and 1063–1098 (GAAF…MSSK). Composition is skewed to pro residues over residues 543 to 565 (IPGP…PPPP) and 578 to 608 (PPPP…PPGG). Positions 544 to 620 (PGPPPPPPLP…PLLSGPIELP (77 aa)) constitute an FH1 domain. The region spanning 625 to 1025 (QKKLYKPDIP…SRRAKLAKEK (401 aa)) is the FH2 domain. The stretch at 999–1050 (FLEALKENHKRKEMEEKSRRAKLAKEKAEQEKLERQKKKKQLIDINKEGDET) forms a coiled coil. Composition is skewed to basic and acidic residues over residues 1007–1032 (HKRK…EKLE) and 1075–1087 (RNPD…LERS). One can recognise a DAD domain in the interval 1048–1078 (DETGVMDNLLEALQSGAAFRDRRKRIPRNPD).

It belongs to the formin homology family. Diaphanous subfamily. Interacts with MAPRE1 and APC.

May be involved in oogenesis. This Mus musculus (Mouse) protein is Protein diaphanous homolog 2 (Diaph2).